Reading from the N-terminus, the 407-residue chain is Bifunctional enzyme IspD/IspF (407 aa).

The 2-C-methyl-D-erythritol 4-phosphate cytidylyltransferase stretch occupies residues 1 to 246 (MTEASENASA…SSERTHFPDI (246 aa)). The segment at 247–407 (RTGNGYDVHA…SVVFPGEVPE (161 aa)) is 2-C-methyl-D-erythritol 2,4-cyclodiphosphate synthase. 2 residues coordinate a divalent metal cation: Asp-253 and His-255. 4-CDP-2-C-methyl-D-erythritol 2-phosphate-binding positions include 253-255 (DVH) and 279-280 (HS). An a divalent metal cation-binding site is contributed by His-287. 4-CDP-2-C-methyl-D-erythritol 2-phosphate is bound by residues 301–303 (DIG), 377–380 (TTNE), Phe-384, and Arg-387.

The protein in the N-terminal section; belongs to the IspD/TarI cytidylyltransferase family. IspD subfamily. It in the C-terminal section; belongs to the IspF family. The cofactor is a divalent metal cation.

The catalysed reaction is 2-C-methyl-D-erythritol 4-phosphate + CTP + H(+) = 4-CDP-2-C-methyl-D-erythritol + diphosphate. It catalyses the reaction 4-CDP-2-C-methyl-D-erythritol 2-phosphate = 2-C-methyl-D-erythritol 2,4-cyclic diphosphate + CMP. It functions in the pathway isoprenoid biosynthesis; isopentenyl diphosphate biosynthesis via DXP pathway; isopentenyl diphosphate from 1-deoxy-D-xylulose 5-phosphate: step 2/6. The protein operates within isoprenoid biosynthesis; isopentenyl diphosphate biosynthesis via DXP pathway; isopentenyl diphosphate from 1-deoxy-D-xylulose 5-phosphate: step 4/6. In terms of biological role, bifunctional enzyme that catalyzes the formation of 4-diphosphocytidyl-2-C-methyl-D-erythritol from CTP and 2-C-methyl-D-erythritol 4-phosphate (MEP) (IspD), and catalyzes the conversion of 4-diphosphocytidyl-2-C-methyl-D-erythritol 2-phosphate (CDP-ME2P) to 2-C-methyl-D-erythritol 2,4-cyclodiphosphate (ME-CPP) with a corresponding release of cytidine 5-monophosphate (CMP) (IspF). In Mesorhizobium japonicum (strain LMG 29417 / CECT 9101 / MAFF 303099) (Mesorhizobium loti (strain MAFF 303099)), this protein is Bifunctional enzyme IspD/IspF.